The following is a 206-amino-acid chain: N-(5'-phosphoribosyl)anthranilate isomerase (206 aa).

It belongs to the TrpF family.

The enzyme catalyses N-(5-phospho-beta-D-ribosyl)anthranilate = 1-(2-carboxyphenylamino)-1-deoxy-D-ribulose 5-phosphate. It functions in the pathway amino-acid biosynthesis; L-tryptophan biosynthesis; L-tryptophan from chorismate: step 3/5. This is N-(5'-phosphoribosyl)anthranilate isomerase from Pseudomonas putida (strain W619).